A 302-amino-acid polypeptide reads, in one-letter code: MLGKARELANYQDEPEQLPTGSFGKNAFLRLGFERRPERTVLATLHRRAPLIVQQALYWDEGMPTLPCVSIISNAGGILQGDRYAIEIDLEPDTQAHVTTQSATRIQEMDANFATQTQTITLGANSYLEYIPHPIIPHKHSRFVQQTEVTIHPTATLIYSEVLMAGRKYYGTGELFHYDLFSSKFHAAHTDGTSLFTEKFIVEPARGNVSRLGAMGSFHVFCNLILLTPKTHADRLFETIDPVFDMDEGIAWGASRLPNDAGLLFKVMGMESAPVRAAIRKIWEAARQEVTGASLPENFLWA.

The protein belongs to the UreD family. As to quaternary structure, ureD, UreF and UreG form a complex that acts as a GTP-hydrolysis-dependent molecular chaperone, activating the urease apoprotein by helping to assemble the nickel containing metallocenter of UreC. The UreE protein probably delivers the nickel.

It localises to the cytoplasm. Required for maturation of urease via the functional incorporation of the urease nickel metallocenter. In Brucella ovis (strain ATCC 25840 / 63/290 / NCTC 10512), this protein is Urease accessory protein UreD 2.